Here is a 392-residue protein sequence, read N- to C-terminus: Ribosomal RNA large subunit methyltransferase G (392 aa).

Belongs to the methyltransferase superfamily. RlmG family.

It localises to the cytoplasm. The catalysed reaction is guanosine(1835) in 23S rRNA + S-adenosyl-L-methionine = N(2)-methylguanosine(1835) in 23S rRNA + S-adenosyl-L-homocysteine + H(+). Its function is as follows. Specifically methylates the guanine in position 1835 (m2G1835) of 23S rRNA. The polypeptide is Ribosomal RNA large subunit methyltransferase G (Shewanella frigidimarina (strain NCIMB 400)).